We begin with the raw amino-acid sequence, 160 residues long: Transcription elongation factor GreA (160 aa).

A coiled-coil region spans residues M1–I71.

Belongs to the GreA/GreB family.

Its function is as follows. Necessary for efficient RNA polymerase transcription elongation past template-encoded arresting sites. The arresting sites in DNA have the property of trapping a certain fraction of elongating RNA polymerases that pass through, resulting in locked ternary complexes. Cleavage of the nascent transcript by cleavage factors such as GreA or GreB allows the resumption of elongation from the new 3'terminus. GreA releases sequences of 2 to 3 nucleotides. This Streptococcus pyogenes serotype M3 (strain ATCC BAA-595 / MGAS315) protein is Transcription elongation factor GreA.